The sequence spans 283 residues: 2,3,4,5-tetrahydropyridine-2,6-dicarboxylate N-succinyltransferase (283 aa).

Residues Arg107 and Asp144 each coordinate substrate.

The protein belongs to the transferase hexapeptide repeat family. Homotrimer.

Its subcellular location is the cytoplasm. The enzyme catalyses (S)-2,3,4,5-tetrahydrodipicolinate + succinyl-CoA + H2O = (S)-2-succinylamino-6-oxoheptanedioate + CoA. It functions in the pathway amino-acid biosynthesis; L-lysine biosynthesis via DAP pathway; LL-2,6-diaminopimelate from (S)-tetrahydrodipicolinate (succinylase route): step 1/3. The sequence is that of 2,3,4,5-tetrahydropyridine-2,6-dicarboxylate N-succinyltransferase from Rhodospirillum rubrum (strain ATCC 11170 / ATH 1.1.1 / DSM 467 / LMG 4362 / NCIMB 8255 / S1).